Consider the following 782-residue polypeptide: ATP-dependent 6-phosphofructokinase, muscle type (782 aa).

At T2 the chain carries N-acetylthreonine. Residues 2–390 (THEEHHAAKT…NWEVYKLLAH (389 aa)) are N-terminal catalytic PFK domain 1. ATP-binding positions include G25, 88–89 (RC), and 118–121 (GDGS). D119 is a Mg(2+) binding site. The residue at position 133 (S133) is a Phosphoserine. Residues 164–166 (SID), R201, 208–210 (MGR), E264, R292, and 298–301 (HVQR) each bind substrate. D166 (proton acceptor) is an active-site residue. S377 carries the phosphoserine modification. Residues 391 to 403 (IRPPVSKTSATMH) are interdomain linker. The segment at 404 to 782 (TVAVMNVGAP…SRKRSGETSI (379 aa)) is C-terminal regulatory PFK domain 2. Residues R473 and 530-534 (TVSNN) each bind beta-D-fructose 2,6-bisphosphate. An O-linked (GlcNAc) serine glycan is attached at S532. Position 559 is an N6-(2-hydroxyisobutyryl)lysine (K559). Residues R568, 575-577 (MGG), E631, R657, and 663-666 (HMQQ) each bind beta-D-fructose 2,6-bisphosphate. Position 669 is a phosphoserine (S669). Residue R737 participates in beta-D-fructose 2,6-bisphosphate binding. At S777 the chain carries Phosphoserine.

This sequence belongs to the phosphofructokinase type A (PFKA) family. ATP-dependent PFK group I subfamily. Eukaryotic two domain clade 'E' sub-subfamily. In terms of assembly, homo- and heterotetramers. Phosphofructokinase (PFK) enzyme functions as a tetramer composed of different combinations of 3 types of subunits, called PFKM (M), PFKL (L) and PFKP (P). The composition of the PFK tetramer differs according to the tissue type it is present in. The kinetic and regulatory properties of the tetrameric enzyme are dependent on the subunit composition, hence can vary across tissues. Interacts (via C-terminus) with HK1 (via N-terminal spermatogenic cell-specific region). Mg(2+) is required as a cofactor. GlcNAcylation decreases enzyme activity.

It localises to the cytoplasm. The enzyme catalyses beta-D-fructose 6-phosphate + ATP = beta-D-fructose 1,6-bisphosphate + ADP + H(+). The protein operates within carbohydrate degradation; glycolysis; D-glyceraldehyde 3-phosphate and glycerone phosphate from D-glucose: step 3/4. With respect to regulation, allosterically activated by ADP, AMP, or fructose 2,6-bisphosphate, and allosterically inhibited by ATP or citrate. Its function is as follows. Catalyzes the phosphorylation of D-fructose 6-phosphate to fructose 1,6-bisphosphate by ATP, the first committing step of glycolysis. This is ATP-dependent 6-phosphofructokinase, muscle type (PFKM) from Canis lupus familiaris (Dog).